Here is a 311-residue protein sequence, read N- to C-terminus: Methionyl-tRNA formyltransferase (311 aa).

(6S)-5,6,7,8-tetrahydrofolate is bound at residue 109 to 112 (SLLP).

Belongs to the Fmt family.

It carries out the reaction L-methionyl-tRNA(fMet) + (6R)-10-formyltetrahydrofolate = N-formyl-L-methionyl-tRNA(fMet) + (6S)-5,6,7,8-tetrahydrofolate + H(+). Functionally, attaches a formyl group to the free amino group of methionyl-tRNA(fMet). The formyl group appears to play a dual role in the initiator identity of N-formylmethionyl-tRNA by promoting its recognition by IF2 and preventing the misappropriation of this tRNA by the elongation apparatus. The protein is Methionyl-tRNA formyltransferase of Moorella thermoacetica (strain ATCC 39073 / JCM 9320).